Consider the following 293-residue polypeptide: ATP synthase gamma chain (293 aa).

It belongs to the ATPase gamma chain family. In terms of assembly, F-type ATPases have 2 components, CF(1) - the catalytic core - and CF(0) - the membrane proton channel. CF(1) has five subunits: alpha(3), beta(3), gamma(1), delta(1), epsilon(1). CF(0) has three main subunits: a, b and c.

It is found in the cell inner membrane. In terms of biological role, produces ATP from ADP in the presence of a proton gradient across the membrane. The gamma chain is believed to be important in regulating ATPase activity and the flow of protons through the CF(0) complex. This chain is ATP synthase gamma chain, found in Psychrobacter sp. (strain PRwf-1).